A 99-amino-acid chain; its full sequence is Spore coat protein F-like protein YraD (99 aa).

Belongs to the CotF family.

It localises to the spore coat. The sequence is that of Spore coat protein F-like protein YraD (yraD) from Bacillus subtilis (strain 168).